The following is a 354-amino-acid chain: MTALKNDRFLRALLKQPVDVTPVWMMRQAGRYLPEYRASRASAGDFMSLCKNPQFACEVTLQPLDRYPLDAAILFSDILTIPDAMGLGLYFETGEGPRFKKTVSTLADIEALPIPDAQKDLGYVMDAVSTIRRELNGRVPLIGFAGSPWTLATYMVEGGSSKDFRKSKAMLYDNPQAMHLLLDKLAQSVTAYLNGQILAGAQAVQIFDSWGGSLSSAAYQEFSLAYMRKIVNGLIREHDGRKVPVIVFTKGGGLWLESIADIGADTLGLDWTCDIGEARQRVGSKVSLQGNMDPTVLYARPEAIRQEVARILASYGSGTGHVFNLGHGITPEVDPANAGAFINAIHELSAQYHQ.

Residues 27-31 (RQAGR), D77, Y154, S209, and H327 contribute to the substrate site.

This sequence belongs to the uroporphyrinogen decarboxylase family. Homodimer.

It is found in the cytoplasm. The enzyme catalyses uroporphyrinogen III + 4 H(+) = coproporphyrinogen III + 4 CO2. The protein operates within porphyrin-containing compound metabolism; protoporphyrin-IX biosynthesis; coproporphyrinogen-III from 5-aminolevulinate: step 4/4. Functionally, catalyzes the decarboxylation of four acetate groups of uroporphyrinogen-III to yield coproporphyrinogen-III. This Pseudomonas savastanoi pv. phaseolicola (strain 1448A / Race 6) (Pseudomonas syringae pv. phaseolicola (strain 1448A / Race 6)) protein is Uroporphyrinogen decarboxylase.